The following is a 102-amino-acid chain: Large ribosomal subunit protein eL30 (102 aa).

Belongs to the eukaryotic ribosomal protein eL30 family. In terms of assembly, part of the 50S ribosomal subunit.

The sequence is that of Large ribosomal subunit protein eL30 from Thermococcus kodakarensis (strain ATCC BAA-918 / JCM 12380 / KOD1) (Pyrococcus kodakaraensis (strain KOD1)).